The chain runs to 268 residues: Glycine/sarcosine N-methyltransferase (268 aa).

S-adenosyl-L-methionine-binding positions include Tyr-26, Trp-34, Arg-43, Ala-67, Asp-88, 114-115 (DW), and Leu-132. Residues Asn-134, Arg-167, and Tyr-206 each coordinate substrate.

Belongs to the class I-like SAM-binding methyltransferase superfamily. Glycine N-methyltransferase family. Monomer.

It carries out the reaction glycine + 2 S-adenosyl-L-methionine = N,N-dimethylglycine + 2 S-adenosyl-L-homocysteine + 2 H(+). The catalysed reaction is glycine + S-adenosyl-L-methionine = sarcosine + S-adenosyl-L-homocysteine + H(+). It catalyses the reaction sarcosine + S-adenosyl-L-methionine = N,N-dimethylglycine + S-adenosyl-L-homocysteine + H(+). The protein operates within amine and polyamine biosynthesis; betaine biosynthesis via glycine pathway; betaine from glycine: step 1/3. It functions in the pathway amine and polyamine biosynthesis; betaine biosynthesis via glycine pathway; betaine from glycine: step 2/3. Its activity is regulated as follows. p-chloromercuribenzoic acid inhibits more than 95% of the GSMT activities on glycine and sarcosine, and S-adenosylhomocysteine (AdoHcy) inhibits completely GSMT activities. Catalyzes the methylation of glycine and sarcosine to sarcosine and dimethylglycine, respectively, with S-adenosylmethionine (AdoMet) acting as the methyl donor. It has strict specificity for glycine and sarcosine as the methyl group acceptors. This chain is Glycine/sarcosine N-methyltransferase, found in Halorhodospira halochloris (Ectothiorhodospira halochloris).